Consider the following 164-residue polypeptide: Thiol peroxidase (164 aa).

Positions 18 to 163 (INEGDFAPDF…FDAALAAYKN (146 aa)) constitute a Thioredoxin domain. Cys-60 serves as the catalytic Cysteine sulfenic acid (-SOH) intermediate. The cysteines at positions 60 and 93 are disulfide-linked.

It belongs to the peroxiredoxin family. Tpx subfamily. As to quaternary structure, homodimer.

It catalyses the reaction a hydroperoxide + [thioredoxin]-dithiol = an alcohol + [thioredoxin]-disulfide + H2O. Its function is as follows. Thiol-specific peroxidase that catalyzes the reduction of hydrogen peroxide and organic hydroperoxides to water and alcohols, respectively. Plays a role in cell protection against oxidative stress by detoxifying peroxides. The polypeptide is Thiol peroxidase (Staphylococcus aureus (strain Mu50 / ATCC 700699)).